Consider the following 292-residue polypeptide: Acetylglutamate kinase (292 aa).

Residues 64–65, Arg86, and Asn190 contribute to the substrate site; that span reads GG.

This sequence belongs to the acetylglutamate kinase family. ArgB subfamily.

It localises to the cytoplasm. The catalysed reaction is N-acetyl-L-glutamate + ATP = N-acetyl-L-glutamyl 5-phosphate + ADP. The protein operates within amino-acid biosynthesis; L-arginine biosynthesis; N(2)-acetyl-L-ornithine from L-glutamate: step 2/4. In terms of biological role, catalyzes the ATP-dependent phosphorylation of N-acetyl-L-glutamate. This is Acetylglutamate kinase from Trichlorobacter lovleyi (strain ATCC BAA-1151 / DSM 17278 / SZ) (Geobacter lovleyi).